The primary structure comprises 469 residues: Glutamate--tRNA ligase (469 aa).

The 'HIGH' region signature appears at 11–21; it reads PSPTGFIHLGN. The segment covering 114–131 has biased composition (basic and acidic residues); it reads QREAGEKPRYDGTWRPEP. A disordered region spans residues 114-139; that stretch reads QREAGEKPRYDGTWRPEPGKVLPEPP. The 'KMSKS' region motif lies at 243-247; sequence KMSKR. Lys246 is an ATP binding site.

This sequence belongs to the class-I aminoacyl-tRNA synthetase family. Glutamate--tRNA ligase type 1 subfamily. In terms of assembly, monomer.

The protein resides in the cytoplasm. The enzyme catalyses tRNA(Glu) + L-glutamate + ATP = L-glutamyl-tRNA(Glu) + AMP + diphosphate. In terms of biological role, catalyzes the attachment of glutamate to tRNA(Glu) in a two-step reaction: glutamate is first activated by ATP to form Glu-AMP and then transferred to the acceptor end of tRNA(Glu). The chain is Glutamate--tRNA ligase from Paraburkholderia phytofirmans (strain DSM 17436 / LMG 22146 / PsJN) (Burkholderia phytofirmans).